A 427-amino-acid polypeptide reads, in one-letter code: tRNA pseudouridine synthase Pus10 (427 aa).

Asp-240 acts as the Nucleophile in catalysis. Residues Tyr-306 and Tyr-378 each contribute to the substrate site.

It belongs to the pseudouridine synthase Pus10 family.

The enzyme catalyses uridine(54) in tRNA = pseudouridine(54) in tRNA. It carries out the reaction uridine(55) in tRNA = pseudouridine(55) in tRNA. In terms of biological role, responsible for synthesis of pseudouridine from uracil-54 and uracil-55 in the psi GC loop of transfer RNAs. The polypeptide is tRNA pseudouridine synthase Pus10 (Halorubrum lacusprofundi (strain ATCC 49239 / DSM 5036 / JCM 8891 / ACAM 34)).